Consider the following 346-residue polypeptide: Ribonucleoside-diphosphate reductase subunit beta (346 aa).

3 residues coordinate Fe cation: glutamate 89, glutamate 120, and histidine 123. Residue tyrosine 129 is part of the active site. Fe cation-binding residues include glutamate 193, glutamate 227, and histidine 230.

The protein belongs to the ribonucleoside diphosphate reductase small chain family. As to quaternary structure, tetramer of two alpha and two beta subunits. The cofactor is Fe cation.

It carries out the reaction a 2'-deoxyribonucleoside 5'-diphosphate + [thioredoxin]-disulfide + H2O = a ribonucleoside 5'-diphosphate + [thioredoxin]-dithiol. Provides the precursors necessary for DNA synthesis. Catalyzes the biosynthesis of deoxyribonucleotides from the corresponding ribonucleotides. This Chlamydia pneumoniae (Chlamydophila pneumoniae) protein is Ribonucleoside-diphosphate reductase subunit beta (nrdB).